Consider the following 237-residue polypeptide: Small ribosomal subunit protein eS4 (237 aa).

Positions 37-100 (IPLAVLLRDV…NEYYRIIPDP (64 aa)) constitute an S4 RNA-binding domain.

Belongs to the eukaryotic ribosomal protein eS4 family.

The sequence is that of Small ribosomal subunit protein eS4 from Caldivirga maquilingensis (strain ATCC 700844 / DSM 13496 / JCM 10307 / IC-167).